Here is a 348-residue protein sequence, read N- to C-terminus: D-amino-acid oxidase (348 aa).

FAD-binding residues include alanine 15, isoleucine 18, lysine 40, serine 52, glycine 56, and asparagine 58. Residues tyrosine 232 and arginine 295 each contribute to the (R)-lactate site. Anthranilate contacts are provided by tyrosine 232 and arginine 295. Residues arginine 295, serine 323, glycine 326, tyrosine 327, and glutamine 328 each contribute to the FAD site.

The protein belongs to the DAMOX/DASOX family. Requires FAD as cofactor.

Its subcellular location is the peroxisome. The catalysed reaction is a D-alpha-amino acid + O2 + H2O = a 2-oxocarboxylate + H2O2 + NH4(+). It carries out the reaction D-serine + O2 + H2O = 3-hydroxypyruvate + H2O2 + NH4(+). The enzyme catalyses D-alanine + O2 + H2O = pyruvate + H2O2 + NH4(+). It catalyses the reaction D-arginine + O2 + H2O = 5-guanidino-2-oxopentanoate + H2O2 + NH4(+). In terms of biological role, catalyzes the oxidative deamination of D-amino acids with broad substrate specificity. Enables the organism to utilize D-amino acids as a source of nutrients. The sequence is that of D-amino-acid oxidase from Schizosaccharomyces pombe (strain 972 / ATCC 24843) (Fission yeast).